The sequence spans 290 residues: Manganese efflux system protein MneS (290 aa).

6 helical membrane-spanning segments follow: residues 15–35 (LVSI…GYLF), 39–61 (ALTA…LIGL), 82–102 (IASL…LFSA), 113–133 (TPDM…LIVY), 159–179 (AFVS…LAWI), and 181–201 (TVTA…IFKE).

Belongs to the cation diffusion facilitator (CDF) transporter (TC 2.A.4) family.

The protein localises to the cell membrane. Secondary manganese efflux system. May prevent manganese intoxication. This Bacillus subtilis (strain 168) protein is Manganese efflux system protein MneS.